The sequence spans 165 residues: MTRKQRRLMMIGGAGVVLVVAVGLVLNAMRGSIVFFSTPKMVHEQNIEAGKRFRLGGVVEPGSLTRGDQLAVAFKVSDGDATVPVAFKGILPDLFREGQGVIAEGALDTAGVFKADTVLAKHDETYMPKDVADALKKQGHWKDDYEKKPPGPGAAASADAMRPAR.

Residues 1–7 (MTRKQRR) lie on the Cytoplasmic side of the membrane. The helical; Signal-anchor for type II membrane protein transmembrane segment at 8 to 28 (LMMIGGAGVVLVVAVGLVLNA) threads the bilayer. Residues 29–165 (MRGSIVFFST…ASADAMRPAR (137 aa)) lie on the Periplasmic side of the membrane. The heme site is built by histidine 122 and tyrosine 126. Positions 138–149 (QGHWKDDYEKKP) are enriched in basic and acidic residues. The disordered stretch occupies residues 138-165 (QGHWKDDYEKKPPGPGAAASADAMRPAR). The segment covering 153 to 165 (GAAASADAMRPAR) has biased composition (low complexity).

This sequence belongs to the CcmE/CycJ family.

It localises to the cell inner membrane. Heme chaperone required for the biogenesis of c-type cytochromes. Transiently binds heme delivered by CcmC and transfers the heme to apo-cytochromes in a process facilitated by CcmF and CcmH. The protein is Cytochrome c-type biogenesis protein CcmE of Rhodopseudomonas palustris (strain HaA2).